The following is a 429-amino-acid chain: Adenylosuccinate synthetase (429 aa).

GTP contacts are provided by residues 12 to 18 and 40 to 42; these read GDEGKGK and GHT. The active-site Proton acceptor is the D13. 2 residues coordinate Mg(2+): D13 and G40. IMP contacts are provided by residues 13–16, 38–41, T128, R142, Q223, T238, and R302; these read DEGK and NAGH. The Proton donor role is filled by H41. 298–304 is a substrate binding site; that stretch reads TVTGRPR. GTP-binding positions include R304, 330–332, and 412–414; these read LLD and SVG.

Belongs to the adenylosuccinate synthetase family. In terms of assembly, homodimer. Requires Mg(2+) as cofactor.

The protein localises to the cytoplasm. The catalysed reaction is IMP + L-aspartate + GTP = N(6)-(1,2-dicarboxyethyl)-AMP + GDP + phosphate + 2 H(+). The protein operates within purine metabolism; AMP biosynthesis via de novo pathway; AMP from IMP: step 1/2. Functionally, plays an important role in the de novo pathway of purine nucleotide biosynthesis. Catalyzes the first committed step in the biosynthesis of AMP from IMP. This Lactobacillus acidophilus (strain ATCC 700396 / NCK56 / N2 / NCFM) protein is Adenylosuccinate synthetase.